The primary structure comprises 161 residues: 18.3 kDa class I heat shock protein (161 aa).

In terms of domain architecture, sHSP spans 48–161 (ETAAFANARI…KPQVKAINVY (114 aa)).

It belongs to the small heat shock protein (HSP20) family. Forms oligomeric structures.

The protein resides in the cytoplasm. This chain is 18.3 kDa class I heat shock protein (HSP18), found in Oxybasis rubra (Red goosefoot).